The primary structure comprises 99 residues: Bublin coiled-coil protein (99 aa).

Positions 34–71 form a coiled coil; it reads LDQINSCLDDIEERNDALNGKLQELLESNRAARRDFRQ. A compositionally biased stretch (basic and acidic residues) spans 66 to 78; sequence RRDFRQQITDHAD. Positions 66–99 are disordered; it reads RRDFRQQITDHADLPPPANDDDEDEQSRDAQKKD.

This sequence belongs to the UPF0184 (EST00098) family.

It localises to the cell junction. The protein localises to the cytoplasm. It is found in the cytoskeleton. Its function is as follows. Essential for intermediate filament organization in intestinal cells, interacts with intermediate filament and regulates intestinal lumen morphology. This is Bublin coiled-coil protein (bbln) from Danio rerio (Zebrafish).